The following is a 501-amino-acid chain: MRLPKLLTFLLWYLAWLDLEFICTVLGAPDLGQRPQGTRPGLAKAEAKERPPLARNVFRPGGHSYGGGATNANARAKGGTGQTGGLTQPKKDEPKKLPPRPGGPEPKPGHPPQTRQATARTVTPKGQLPGGKAPPKAGSVPSSFLLKKAREPGPPREPKEPFRPPPITPHEYMLSLYRTLSDADRKGGNSSVKLEAGLANTITSFIDKGQDDRGPVVRKQRYVFDISALEKDGLLGAELRILRKKPSDTAKPAAPGGGRAAQLKLSSCPSGRQPAALLDVRSVPGLDGSGWEVFDIWKLFRNFKNSAQLCLELEAWERGRAVDLRGLGFDRAARQVHEKALFLVFGRTKKRDLFFNEIKARSGQDDKTVYEYLFSQRRKRRAPLATRQGKRPSKNLKARCSRKALHVNFKDMGWDDWIIAPLEYEAFHCEGLCEFPLRSHLEPTNHAVIQTLMNSMDPESTPPTCCVPTRLSPISILFIDSANNVVYKQYEDMVVESCGCR.

The first 27 residues, 1–27 (MRLPKLLTFLLWYLAWLDLEFICTVLG), serve as a signal peptide directing secretion. A propeptide spanning residues 28 to 381 (APDLGQRPQG…YLFSQRRKRR (354 aa)) is cleaved from the precursor. The segment at 29-169 (PDLGQRPQGT…EPFRPPPITP (141 aa)) is disordered. Over residues 99-111 (PRPGGPEPKPGHP) the composition is skewed to pro residues. Basic and acidic residues predominate over residues 148–162 (KAREPGPPREPKEPF). Residue asparagine 189 is glycosylated (N-linked (GlcNAc...) asparagine). The disordered stretch occupies residues 246 to 265 (PSDTAKPAAPGGGRAAQLKL). Disulfide bonds link cysteine 400-cysteine 466, cysteine 429-cysteine 498, and cysteine 433-cysteine 500.

It belongs to the TGF-beta family. As to quaternary structure, homodimer; disulfide-linked. Interacts with serine proteases, HTRA1 and HTRA3. Following LPS binding, may form a complex with CXCR4, HSP90AA1 and HSPA8. Interacts with high affinity with NOG; inhibits chondrogenesis. Interacts with high affinity with BMPR1B and lower affinity with BMPR1A; positively regulates chondrocyte differentiation and induces SMAD dependent signaling. Interacts with FBN1 (via N-terminal domain) and FBN2. Interacts with TGFBR3. Predominantly expressed in long bones during embryonic development. Expressed in monocytes (at protein level).

The protein resides in the secreted. It is found in the cell membrane. Growth factor involved in bone and cartilage formation. During cartilage development regulates differentiation of chondrogenic tissue through two pathways. Firstly, positively regulates differentiation of chondrogenic tissue through its binding of high affinity with BMPR1B and of less affinity with BMPR1A, leading to induction of SMAD1-SMAD5-SMAD8 complex phosphorylation and then SMAD protein signaling transduction. Secondly, negatively regulates chondrogenic differentiation through its interaction with NOG. Required to prevent excessive muscle loss upon denervation. This function requires SMAD4 and is mediated by phosphorylated SMAD1/5/8. Binds bacterial lipopolysaccharide (LPS) and mediates LPS-induced inflammatory response, including TNF secretion by monocytes. This chain is Growth/differentiation factor 5 (GDF5), found in Homo sapiens (Human).